The sequence spans 215 residues: MGVRAQQKEKTRRSLVEAAFSQLSAERSFASLSLREVAREAGIAPTSFYRHFRDVDELGLTMVDESGLMLRQLMRQARQRIAKGGSVIRTSVSTFMEFIGNNPNAFRLLLRERSGTSAAFRAAVAREIQHFIAELADYLELENHMPRAFTEAQAEAMVTIVFSAGAEALDVGVEQRRQLEERLVLQLRMISKGAYYWYRREQEKTAIIPGNVKDE.

Positions 10-70 constitute an HTH tetR-type domain; it reads KTRRSLVEAA…TMVDESGLML (61 aa). Residues 33–52 constitute a DNA-binding region (H-T-H motif); the sequence is SLREVAREAGIAPTSFYRHF.

As to quaternary structure, homodimer.

It is found in the cytoplasm. In terms of biological role, represses the transcription of fabB, involved in unsaturated fatty acid (UFA) biosynthesis. By controlling UFA production, FabR directly influences the physical properties of the membrane bilayer. The protein is HTH-type transcriptional repressor FabR of Escherichia coli O139:H28 (strain E24377A / ETEC).